A 483-amino-acid polypeptide reads, in one-letter code: MADLASRITKPDEAPAAAPEAAPVSAPASEEPKAPENETSIEESQSNLVKNEYEVEIKLSDLQNDTESPLYSVSSFDELGLPEAVNRGLLAINFKKPSKVQEKCLPLMLSDPPRNMIAQSQSGTGKTAAFVLTVLSRIDLSKPHQPQALLLAPSRELARQIQTVVQTIGQFCENLIVEAAIPGAISRETGVRGSVVVGTPGTVMDLVKRRQFDISQLKVLVIDEADNMLDQQGLGDQCVRVKNMLPKTIQILLFSATFPDKVLRFAERFAPNANQMKLKHKELTVKGISQMFMDCPTEKDKYDILCKLYGLMTIGSSVIFVRTRETANEIQKRMEADGHKVSALHGAYEGQSRDVLLDEFRSGRSKVLITTNVLARGIDVSSVSMVINYDIPMKGPGEREPDAETYLHRIGRTGRFGRVGVSISFVHDRRSFEALSQIAQFYGIDLIQLNPNDLDDTERKVQEVIKSSRAQAEYVPSATDSAV.

The interval 1–47 (MADLASRITKPDEAPAAAPEAAPVSAPASEEPKAPENETSIEESQSN) is disordered. The segment covering 14-29 (APAAAPEAAPVSAPAS) has biased composition (low complexity). The Q motif motif lies at 74-102 (SSFDELGLPEAVNRGLLAINFKKPSKVQE). One can recognise a Helicase ATP-binding domain in the interval 107–276 (LMLSDPPRNM…ERFAPNANQM (170 aa)). 120 to 127 (SQSGTGKT) serves as a coordination point for ATP. A DEAD box motif is present at residues 223-226 (DEAD). Residues 304–455 (ILCKLYGLMT…LIQLNPNDLD (152 aa)) enclose the Helicase C-terminal domain.

The protein belongs to the DEAD box helicase family. DDX19/DBP5 subfamily. As to quaternary structure, associates with the nuclear pore complex.

The protein resides in the cytoplasm. The protein localises to the nucleus. Its subcellular location is the nuclear pore complex. It localises to the nucleus membrane. It catalyses the reaction ATP + H2O = ADP + phosphate + H(+). Its function is as follows. ATP-dependent RNA helicase associated with the nuclear pore complex and essential for mRNA export from the nucleus. May participate in a terminal step of mRNA export through the removal of proteins that accompany mRNA through the nucleopore complex. May also be involved in early transcription. This is ATP-dependent RNA helicase dbp-5 (dbp-5) from Neurospora crassa (strain ATCC 24698 / 74-OR23-1A / CBS 708.71 / DSM 1257 / FGSC 987).